We begin with the raw amino-acid sequence, 689 residues long: tRNA 5-methylaminomethyl-2-thiouridine biosynthesis bifunctional protein MnmC (689 aa).

Residues methionine 1–proline 245 are tRNA (mnm(5)s(2)U34)-methyltransferase. The FAD-dependent cmnm(5)s(2)U34 oxidoreductase stretch occupies residues isoleucine 270–arginine 689.

It in the N-terminal section; belongs to the methyltransferase superfamily. tRNA (mnm(5)s(2)U34)-methyltransferase family. This sequence in the C-terminal section; belongs to the DAO family. Requires FAD as cofactor.

The protein localises to the cytoplasm. The catalysed reaction is 5-aminomethyl-2-thiouridine(34) in tRNA + S-adenosyl-L-methionine = 5-methylaminomethyl-2-thiouridine(34) in tRNA + S-adenosyl-L-homocysteine + H(+). Its function is as follows. Catalyzes the last two steps in the biosynthesis of 5-methylaminomethyl-2-thiouridine (mnm(5)s(2)U) at the wobble position (U34) in tRNA. Catalyzes the FAD-dependent demodification of cmnm(5)s(2)U34 to nm(5)s(2)U34, followed by the transfer of a methyl group from S-adenosyl-L-methionine to nm(5)s(2)U34, to form mnm(5)s(2)U34. The polypeptide is tRNA 5-methylaminomethyl-2-thiouridine biosynthesis bifunctional protein MnmC (Yersinia pseudotuberculosis serotype O:1b (strain IP 31758)).